The primary structure comprises 105 residues: Met repressor (105 aa).

Belongs to the MetJ family. As to quaternary structure, homodimer.

Its subcellular location is the cytoplasm. This regulatory protein, when combined with SAM (S-adenosylmethionine) represses the expression of the methionine regulon and of enzymes involved in SAM synthesis. This is Met repressor from Sodalis glossinidius (strain morsitans).